The chain runs to 89 residues: Small ribosomal subunit protein uS15 (89 aa).

The protein belongs to the universal ribosomal protein uS15 family. Part of the 30S ribosomal subunit. Forms a bridge to the 50S subunit in the 70S ribosome, contacting the 23S rRNA.

In terms of biological role, one of the primary rRNA binding proteins, it binds directly to 16S rRNA where it helps nucleate assembly of the platform of the 30S subunit by binding and bridging several RNA helices of the 16S rRNA. Functionally, forms an intersubunit bridge (bridge B4) with the 23S rRNA of the 50S subunit in the ribosome. The protein is Small ribosomal subunit protein uS15 of Prochlorococcus marinus (strain MIT 9515).